We begin with the raw amino-acid sequence, 2310 residues long: Peroxide stress-activated histidine kinase mak2 (2310 aa).

One can recognise a Protein kinase domain in the interval 12–292 (DYAISQLGEF…SATDLCYTIV (281 aa)). Residues 1450–1592 (RLGPLLTTVI…LLSQQIAISV (143 aa)) enclose the GAF domain. The region spanning 1760 to 1986 (NMSHELRTPF…TFWFHVQLRN (227 aa)) is the Histidine kinase domain. Histidine 1763 is modified (phosphohistidine; by autocatalysis). Residues 2180–2303 (YALIAEDNLI…QLVNAVREFV (124 aa)) form the Response regulatory domain. 4-aspartylphosphate is present on aspartate 2232.

The protein localises to the cytoplasm. The enzyme catalyses ATP + protein L-histidine = ADP + protein N-phospho-L-histidine.. Functionally, involved in the control of the SAPK-dependent transcriptional response to peroxide stress. Regulates sty1 activity. The chain is Peroxide stress-activated histidine kinase mak2 (mak2) from Schizosaccharomyces pombe (strain 972 / ATCC 24843) (Fission yeast).